Consider the following 600-residue polypeptide: Lamin-B2 (600 aa).

Positions 2–27 are head; it reads SGTPIRGTPGGTPLSPTRISRLQEKE. Residue serine 16 is modified to Phosphoserine; by CDK1. One can recognise an IF rod domain in the interval 25 to 381; that stretch reads EKEELRQLND…KLLEGEEERL (357 aa). Residues 28 to 64 form a coil 1A region; the sequence is ELRQLNDRLAVYIDRVRALELENDRLLVKISEKEEVT. The tract at residues 75-212 is coil 1B; it reads YESELADARR…NVFEEEIRET (138 aa). Residues 237–379 are coil 2; sequence QALEDLRNQH…YRKLLEGEEE (143 aa). Disordered regions lie at residues 377-449 and 568-600; these read EEER…QMSQ and ENEE…CLVM. The interval 380–600 is tail; the sequence is RLKLSPSPSS…RTTSRGCLVM (221 aa). Residues 383 to 410 show a composition bias toward low complexity; it reads LSPSPSSRVTVSRATSSSSSSSTSLVRS. Serine 386 is subject to Phosphoserine. The Nuclear localization signal motif lies at 414–419; that stretch reads KRRRIE. In terms of domain architecture, LTD spans 445–562; the sequence is FQMSQQASAT…EEVAVRTVTK (118 aa). The segment covering 569 to 583 has biased composition (acidic residues); it reads NEEEEDEADFGEEDL. Polar residues predominate over residues 584–600; that stretch reads FNQQGDPRTTSRGCLVM. A Cysteine methyl ester modification is found at cysteine 597. The S-farnesyl cysteine moiety is linked to residue cysteine 597. The propeptide at 598–600 is removed in mature form; that stretch reads LVM.

It belongs to the intermediate filament family. In terms of assembly, homodimer. Lamin dimers then assemble into dimeric head-to-tail polymers. Ultimately, two head-to-tail polymers assemble laterally into a protofilament with a uniformly shaped rod of 3.5 nm in diameter. Post-translationally, phosphorylation plays a key role in lamin organization, subcellular localization and nuclear envelope disintegration. Phosphorylation by CDK1 at Ser-16 at the onset of mitosis drives lamin disassembly and nuclear envelope breakdown.

It is found in the nucleus lamina. The protein localises to the nucleus envelope. It localises to the nucleus. The protein resides in the nucleoplasm. Its subcellular location is the nucleus matrix. Functionally, lamins are intermediate filament proteins that assemble into a filamentous meshwork, and which constitute the major components of the nuclear lamina, a fibrous layer on the nucleoplasmic side of the inner nuclear membrane. Lamins provide a framework for the nuclear envelope, bridging the nuclear envelope and chromatin. Plays an important role in nuclear assembly, chromatin organization, nuclear membrane and telomere dynamics. This chain is Lamin-B2 (LMNB2), found in Gallus gallus (Chicken).